The primary structure comprises 418 residues: cAMP-dependent protein kinase type II-beta regulatory subunit (418 aa).

Residues 2 to 153 (SIEIPAGLTE…RLQEACKDIL (152 aa)) form a dimerization and phosphorylation region. Positions 45 to 57 (RKGTARFGHEGRT) are enriched in basic and acidic residues. Positions 45–98 (RKGTARFGHEGRTWGDAGAAGGGGTPSKGVNFAEEPRHSDSENGEEEEEEAADA) are disordered. A Phosphothreonine modification is found at T69. 2 positions are modified to phosphoserine: S83 and S85. Positions 86 to 96 (ENGEEEEEEAA) are enriched in acidic residues. Phosphoserine is present on S114. Residues 154–275 (LFKN…ESLP), E223, R232, 276–418 (FLKS…EPTA), E352, and R361 each bind 3',5'-cyclic AMP.

The protein belongs to the cAMP-dependent kinase regulatory chain family. In terms of assembly, the inactive form of the enzyme is composed of two regulatory chains and two catalytic chains. Activation by cAMP produces two active catalytic monomers and a regulatory dimer that binds four cAMP molecules. Interacts with PRKACA and PRKACB. Interacts with the phosphorylated form of PJA2. Forms a complex composed of PRKAR2B, GSK3B and GSKIP through GSKIP interaction; facilitates PKA-induced phosphorylation and regulates GSK3B activity. In terms of processing, phosphorylated by the activated catalytic chain. In terms of tissue distribution, four types of regulatory chains are found: I-alpha, I-beta, II-alpha, and II-beta. Their expression varies among tissues and is in some cases constitutive and in others inducible.

Its subcellular location is the cytoplasm. It localises to the cell membrane. Its function is as follows. Regulatory subunit of the cAMP-dependent protein kinases involved in cAMP signaling in cells. Type II regulatory chains mediate membrane association by binding to anchoring proteins, including the MAP2 kinase. The protein is cAMP-dependent protein kinase type II-beta regulatory subunit (PRKAR2B) of Bos taurus (Bovine).